Reading from the N-terminus, the 489-residue chain is Glutamate--tRNA ligase (489 aa).

The 'HIGH' region signature appears at 12-22 (PSPTGIPHVGM). A 'KMSKS' region motif is present at residues 256-260 (KLSKR). Position 259 (Lys-259) interacts with ATP.

This sequence belongs to the class-I aminoacyl-tRNA synthetase family. Glutamate--tRNA ligase type 1 subfamily. In terms of assembly, monomer.

It localises to the cytoplasm. The catalysed reaction is tRNA(Glu) + L-glutamate + ATP = L-glutamyl-tRNA(Glu) + AMP + diphosphate. Its function is as follows. Catalyzes the attachment of glutamate to tRNA(Glu) in a two-step reaction: glutamate is first activated by ATP to form Glu-AMP and then transferred to the acceptor end of tRNA(Glu). This Mycobacterium ulcerans (strain Agy99) protein is Glutamate--tRNA ligase.